Here is a 145-residue protein sequence, read N- to C-terminus: Male-specific protein scotti (145 aa).

Residues 1–34 (MANNRLMPEGQIIEEDMDGEDQNARELDIDDDDD) form a disordered region. Positions 12–21 (IIEEDMDGED) are enriched in acidic residues.

The protein belongs to the male-specific scotti family.

Its function is as follows. Post-meiotically transcribed gene that has a role in late spermiogenesis; required for actin cone progression during spermatid individualization. The sequence is that of Male-specific protein scotti from Drosophila willistoni (Fruit fly).